Here is a 263-residue protein sequence, read N- to C-terminus: Outer membrane protein OmpK (263 aa).

The first 20 residues, 1-20 (MRKSLLALSLLAATSAPVLA), serve as a signal peptide directing secretion.

Belongs to the nucleoside-specific channel-forming outer membrane porin (Tsx) (TC 1.B.10) family.

The protein localises to the cell outer membrane. Serves as receptor for a broad-host-range vibriophage, KVP40. The chain is Outer membrane protein OmpK from Vibrio parahaemolyticus.